Here is a 388-residue protein sequence, read N- to C-terminus: Beta-lactamase (388 aa).

The N-terminal stretch at 1–24 (MMKKSIINTLIFTSIATFPLYTLA) is a signal peptide. Ser89 functions as the Acyl-ester intermediate in the catalytic mechanism. Residue Tyr175 is the Proton acceptor of the active site. 342–344 (KTG) is a binding site for substrate.

Belongs to the class-C beta-lactamase family.

The protein localises to the periplasm. It catalyses the reaction a beta-lactam + H2O = a substituted beta-amino acid. In terms of biological role, this protein is a serine beta-lactamase with a substrate specificity for cephalosporins. In Yersinia enterocolitica, this protein is Beta-lactamase (ampC).